We begin with the raw amino-acid sequence, 176 residues long: Sperm-egg fusion protein TMEM95 (176 aa).

The first 16 residues, 1-16 (MWVLALGGAFLAVAKA), serve as a signal peptide directing secretion. Disulfide bonds link C17-C119, C20-C122, C106-C129, and C110-C135. Over 17–146 (CIFCRLQDHA…PDSHDLWDAR (130 aa)) the chain is Extracellular. 2 N-linked (GlcNAc...) asparagine glycosylation sites follow: N36 and N118. The chain crosses the membrane as a helical span at residues 147 to 167 (ILLLCIFGIVLLSGVVSLQVE). The Cytoplasmic portion of the chain corresponds to 168–176 (YLNLQAKDL).

It belongs to the TMEM95 family. In terms of assembly, does not interact with sperm-egg fusion proteins IZUMO1 or IZUMO1R/JUNO. Post-translationally, N-glycosylated. As to expression, expressed exclusively in testis.

It localises to the cytoplasmic vesicle. Its subcellular location is the secretory vesicle. The protein resides in the acrosome membrane. In terms of biological role, sperm protein required for fusion of sperm with the egg membrane during fertilization. The sequence is that of Sperm-egg fusion protein TMEM95 from Mus musculus (Mouse).